Here is a 103-residue protein sequence, read N- to C-terminus: Small ribosomal subunit protein uS10 (103 aa).

This sequence belongs to the universal ribosomal protein uS10 family. As to quaternary structure, part of the 30S ribosomal subunit.

Functionally, involved in the binding of tRNA to the ribosomes. This is Small ribosomal subunit protein uS10 from Sulfurovum sp. (strain NBC37-1).